Consider the following 818-residue polypeptide: H(+)/Cl(-) exchange transporter 3 (818 aa).

Topologically, residues 1 to 125 (MESEQLFHRG…WEMTKSLYDA (125 aa)) are cytoplasmic. A Di-leucine internalization motif; mediates targeting to late endosome and lysosome membranes motif is present at residues 13–17 (RNSYN). The IP motif; mediates targeting to recycling endosomes signature appears at 18 to 19 (SI). Short sequence motifs (di-leucine internalization motif; mediates targeting to late endosome and lysosome membranes) lie at residues 28-29 (LL), 46-47 (LL), and 71-75 (LLDLL). A helical transmembrane segment spans residues 126-163 (WSGWLVVTLTGLASGALAGLIDIAADWMTDLKEGICLS). Asn-177 is a glycosylation site (N-linked (GlcNAc...) asparagine). The chain crosses the membrane as a helical span at residues 209-232 (MNYIMYIFWALSFAFLAVSLVKVF). The Selectivity filter part_1 signature appears at 238 to 242 (GSGIP). Ser-239 contributes to the chloride binding site. The helical intramembrane region spans 241–248 (IPEIKTIL). A run of 2 helical transmembrane segments spans residues 258 to 276 (GKWT…VASG) and 282 to 301 (EGPL…YLFP). A Selectivity filter part_2 motif is present at residues 280–284 (GKEGP). 2 consecutive intramembrane regions (helical) follow at residues 313 to 325 (VLSA…VSVA) and 329 to 337 (PIGGVLFSL). Helical transmembrane passes span 349–367 (LWRS…RSIN), 391–416 (FPFI…AWCR), and 423–443 (FGKY…VIAF). Residues Asn-451 and Asn-479 are each glycosylated (N-linked (GlcNAc...) asparagine). The next 2 membrane-spanning stretches (helical) occupy residues 500–520 (IWQL…TFGI) and 525–544 (GLFI…VGIA). The Selectivity filter part_3 signature appears at 525–529 (GLFIP). Phe-527 lines the chloride pocket. 2 consecutive intramembrane regions (helical) follow at residues 572–586 (GLYA…LGGV) and 590–601 (TVSLVVIVFELT). An intramembrane region (note=Loop between two helices) is located at residues 602-605 (GGLE). A helical transmembrane segment spans residues 606 to 624 (YIVPLMAAVMTSKWVGDAF). Residues 625–818 (GREGIYEAHI…NQDPASIMFN (194 aa)) are Cytoplasmic-facing. Tyr-630 serves as a coordination point for chloride. CBS domains are found at residues 658 to 722 (MRPR…ARKK) and 755 to 812 (LDMS…NQDP). ATP contacts are provided by residues 689 to 691 (YNG) and 796 to 799 (TKKD).

The protein belongs to the chloride channel (TC 2.A.49) family. ClC-3/CLCN3 subfamily. As to quaternary structure, monomer and homodimer. Forms heterodimers with CLCN4. In terms of processing, N-glycosylated. As to expression, detected in kidney, in the apical part of proximal tubule cells (at protein level). Expressed at high levels in the kidney while a low level expression is seen in the brain. Within the brain, it is prominent in the hippocampus, cerebral cortex and olfactory bulb. Brain, pancreas, kidney, liver, lung, retina, olfactory bulb, and spinal cord. In terms of tissue distribution, pancreas, kidney, liver, lung and retina. As to expression, brain, heart, pancreas, kidney, liver, lung, retina, olfactory bulb, and spinal cord. Expressed at high levels in the liver and at low levels in the brain.

Its subcellular location is the cytoplasmic vesicle. The protein localises to the secretory vesicle membrane. It is found in the lysosome membrane. The protein resides in the late endosome membrane. It localises to the cell membrane. Its subcellular location is the early endosome membrane. The protein localises to the recycling endosome membrane. Inhibited by Cd(2+). May influence large dense-core vesicle exocytosis in adrenal chromaffin cells. Functionally, strongly outwardly rectifying, electrogenic H(+)/Cl(-)exchanger which mediates the exchange of chloride ions against protons. The CLC channel family contains both chloride channels and proton-coupled anion transporters that exchange chloride or another anion for protons. The presence of conserved gating glutamate residues is typical for family members that function as antiporters. In terms of biological role, strongly outwardly rectifying, electrogenic H(+)/Cl(-)exchanger which mediates the exchange of chloride ions against protons. Facilitates endosomal acidification and chloride accumulation in hepatocytes. Its function is as follows. Strongly outwardly rectifying, electrogenic H(+)/Cl(-)exchanger which mediates the exchange of chloride ions against protons. This Mus musculus (Mouse) protein is H(+)/Cl(-) exchange transporter 3 (Clcn3).